Reading from the N-terminus, the 347-residue chain is Quinolinate synthase (347 aa).

Iminosuccinate is bound by residues His47 and Ser68. Cys113 contacts [4Fe-4S] cluster. Iminosuccinate is bound by residues Tyr139–Asn141 and Ser156. [4Fe-4S] cluster is bound at residue Cys200. Iminosuccinate is bound by residues His226–Glu228 and Thr243. Cys297 provides a ligand contact to [4Fe-4S] cluster.

This sequence belongs to the quinolinate synthase family. Type 1 subfamily. It depends on [4Fe-4S] cluster as a cofactor.

It localises to the cytoplasm. The catalysed reaction is iminosuccinate + dihydroxyacetone phosphate = quinolinate + phosphate + 2 H2O + H(+). The protein operates within cofactor biosynthesis; NAD(+) biosynthesis; quinolinate from iminoaspartate: step 1/1. In terms of biological role, catalyzes the condensation of iminoaspartate with dihydroxyacetone phosphate to form quinolinate. This Salmonella enteritidis PT4 (strain P125109) protein is Quinolinate synthase.